The following is a 64-amino-acid chain: Large ribosomal subunit protein bL35 (64 aa).

Belongs to the bacterial ribosomal protein bL35 family.

In Ureaplasma urealyticum serovar 10 (strain ATCC 33699 / Western), this protein is Large ribosomal subunit protein bL35.